A 341-amino-acid chain; its full sequence is Glucokinase (341 aa).

Residue 18 to 23 participates in ATP binding; the sequence is GDIGGT.

It belongs to the bacterial glucokinase family.

The protein resides in the cytoplasm. The catalysed reaction is D-glucose + ATP = D-glucose 6-phosphate + ADP + H(+). The chain is Glucokinase from Rhizobium etli (strain CIAT 652).